Reading from the N-terminus, the 85-residue chain is Conotoxin Lt28.7 (85 aa).

Positions 1-21 (MPKLEMMLLVLLILPLCYIDA) are cleaved as a signal peptide. Positions 22-40 (VGPPPPWNMEDEIIEHWQE) are excised as a propeptide.

The protein belongs to the conotoxin D superfamily. Contains 5 disulfide bonds. As to expression, expressed by the venom duct.

Its subcellular location is the secreted. Probable neurotoxin. In Conus litteratus (Lettered cone), this protein is Conotoxin Lt28.7.